The primary structure comprises 298 residues: Ribonuclease HIII (298 aa).

One can recognise an RNase H type-2 domain in the interval 86-298 (RPRLGVDESG…KTFDEICSGK (213 aa)). Residues Asp-92, Glu-93, and Asp-196 each contribute to the a divalent metal cation site.

This sequence belongs to the RNase HII family. RnhC subfamily. It depends on Mn(2+) as a cofactor. The cofactor is Mg(2+).

The protein resides in the cytoplasm. The enzyme catalyses Endonucleolytic cleavage to 5'-phosphomonoester.. In terms of biological role, endonuclease that specifically degrades the RNA of RNA-DNA hybrids. This is Ribonuclease HIII (rnhC) from Chlamydia pneumoniae (Chlamydophila pneumoniae).